The sequence spans 727 residues: MSMHFRNKAWIILAILCFSSLIHSTEAVVTYDHKALIINGQRRILISGSIHYPRSTPEMWPDLIKKAKEGGLDVIQTYVFWNGHEPSPGNYYFQDRYDLVKFTKLVHQAGLYLDLRIGPYVCAEWNFGGFPVWLKYVPGMVFRTDNEPFKIAMQKFTKKIVDMMKEEKLFETQGGPIILSQIENEYGPMQWEMGAAGKAYSKWTAEMALGLSTGVPWIMCKQEDAPYPIIDTCNGFYCEGFKPNSDNKPKLWTENWTGWFTEFGGAIPNRPVEDIAFSVARFIQNGGSFMNYYMYYGGTNFDRTAGVFIATSYDYDAPIDEYGLLREPKYSHLKELHKVIKLCEPALVSVDPTITSLGDKQEIHVFKSKTSCAAFLSNYDTSSAARVMFRGFPYDLPPWSVSILPDCKTEYYNTAKIRAPTILMKMIPTSTKFSWESYNEGSPSSNEAGTFVKDGLVEQISMTRDKTDYFWYFTDITIGSDESFLKTGDNPLLTIFSAGHALHVFVNGLLAGTSYGALSNSKLTFSQNIKLSVGINKLALLSTAVGLPNAGVHYETWNTGILGPVTLKGVNSGTWDMSKWKWSYKIGLRGEAMSLHTLAGSSAVKWWIKGFVVKKQPLTWYKSSFDTPRGNEPLALDMNTMGKGQVWVNGHNIGRHWPAYTARGNCGRCNYAGIYNEKKCLSHCGEPSQRWYHVPRSWLKPFGNLLVIFEEWGGDPSGISLVKRTAK.

Positions 1 to 27 are cleaved as a signal peptide; the sequence is MSMHFRNKAWIILAILCFSSLIHSTEA. Glutamate 185 acts as the Proton donor in catalysis. Catalysis depends on glutamate 254, which acts as the Nucleophile. An N-linked (GlcNAc...) asparagine glycan is attached at asparagine 255.

This sequence belongs to the glycosyl hydrolase 35 family. Ubiquitous, with higher expression levels in roots and siliques.

The protein localises to the secreted. It is found in the extracellular space. Its subcellular location is the apoplast. The enzyme catalyses Hydrolysis of terminal non-reducing beta-D-galactose residues in beta-D-galactosides.. This chain is Beta-galactosidase 2 (BGAL2), found in Arabidopsis thaliana (Mouse-ear cress).